The primary structure comprises 878 residues: DNA gyrase subunit A (878 aa).

One can recognise a Topo IIA-type catalytic domain in the interval 34 to 533 (LPDVRDGLKP…NSADINIEDL (500 aa)). The O-(5'-phospho-DNA)-tyrosine intermediate role is filled by Tyr122. Residues 560–566 (QRRGGKG) carry the GyrA-box motif. Positions 844-878 (DDEELDAIDGSVAEGDEDIAPEAESDDDVADDADE) are disordered. A compositionally biased stretch (acidic residues) spans 857–878 (EGDEDIAPEAESDDDVADDADE).

Belongs to the type II topoisomerase GyrA/ParC subunit family. As to quaternary structure, heterotetramer, composed of two GyrA and two GyrB chains. In the heterotetramer, GyrA contains the active site tyrosine that forms a transient covalent intermediate with DNA, while GyrB binds cofactors and catalyzes ATP hydrolysis.

It localises to the cytoplasm. It carries out the reaction ATP-dependent breakage, passage and rejoining of double-stranded DNA.. Functionally, a type II topoisomerase that negatively supercoils closed circular double-stranded (ds) DNA in an ATP-dependent manner to modulate DNA topology and maintain chromosomes in an underwound state, and also catalyzes the interconversion of other topological isomers of double-stranded DNA rings, including catenanes and knotted rings. Replenishes negative supercoiling downstream of highly transcribed genes to help control overall chromosomal supercoiling density. E.coli makes 15% more negative supercoils in pBR322 plasmid DNA than S.typhimurium; the S.typhimurium GyrB subunit is toxic in E.coli, while the E.coli copy can be expressed in S.typhimurium even though the 2 subunits have 777/804 residues identical. Negative supercoiling favors strand separation, and DNA replication, transcription, recombination and repair, all of which involve strand separation. Type II topoisomerases break and join 2 DNA strands simultaneously in an ATP-dependent manner. In Salmonella typhimurium (strain LT2 / SGSC1412 / ATCC 700720), this protein is DNA gyrase subunit A.